The chain runs to 477 residues: Proline--tRNA ligase (477 aa).

3 residues coordinate L-proline: Thr111, Glu113, and Arg142. ATP-binding residues include Arg142, Thr153, Gln225, and Thr228. His230 lines the L-proline pocket. Residues Ser262 and Arg264 each contribute to the ATP site. Positions 340-369 (ELKGVPFRVELGPKDLEGGQAVLASRLGGK) are interaction with tRNA. Cys427, Cys432, Cys458, and Cys461 together coordinate Zn(2+).

It belongs to the class-II aminoacyl-tRNA synthetase family. ProS type 3 subfamily. Homodimer. Only one tRNA molecule binds per dimer.

The protein localises to the cytoplasm. The enzyme catalyses tRNA(Pro) + L-proline + ATP = L-prolyl-tRNA(Pro) + AMP + diphosphate. Functionally, catalyzes the attachment of proline to tRNA(Pro) in a two-step reaction: proline is first activated by ATP to form Pro-AMP and then transferred to the acceptor end of tRNA(Pro). Can inadvertently accommodate and process cysteine. The polypeptide is Proline--tRNA ligase (proS) (Thermus thermophilus (strain ATCC 27634 / DSM 579 / HB8)).